Here is a 1512-residue protein sequence, read N- to C-terminus: Mitogen-activated protein kinase kinase kinase 1 (1512 aa).

Positions 1-13 (MAAAAGNRASSSG) are enriched in low complexity. Disordered stretches follow at residues 1-37 (MAAA…SSAP), 67-181 (SVEL…DRPE), and 213-304 (VKPI…PEET). Ala2 carries the post-translational modification N-acetylalanine. A phosphoserine mark is found at Ser21 and Ser35. 3 stretches are compositionally biased toward low complexity: residues 81 to 99 (AASP…ADAA), 129 to 142 (AAPD…AAAE), and 150 to 160 (AAEPSPAAAPA). Phosphoserine is present on residues Ser137 and Ser154. Basic and acidic residues predominate over residues 162 to 181 (REMENKETLKGLHKMDDRPE). Over residues 250–260 (SPSPGNSPSGR) the composition is skewed to low complexity. A Phosphoserine modification is found at Ser275. Residue Thr285 is modified to Phosphothreonine. Residues Ser292, Ser297, and Ser300 each carry the phosphoserine modification. The segment at 338–366 (YRVFIGPQNCSCARGTFCIHLLFVMLRVF) adopts an SWIM-type zinc-finger fold. The segment covering 416–433 (SNSHTLSSSSTSTSSSEN) has biased composition (low complexity). The tract at residues 416–436 (SNSHTLSSSSTSTSSSENSIK) is disordered. The segment at 443 to 492 (CPICLLGMLDEESLTVCEDGCRNKLHHHCMSIWAEECRRNREPLICPLCR) adopts an RING-type zinc-finger fold. Phosphoserine is present on residues Ser507 and Ser531. 2 disordered regions span residues 511-532 (SPSS…AGSR) and 602-624 (STGN…GSSQ). Over residues 611-624 (GSSPSGGATSGSSQ) the composition is skewed to low complexity. Position 923 is a phosphoserine (Ser923). The tract at residues 933-972 (SISVGPSSSTTTTTTTTEQPKPMVQTKGRPHSQCLNSSPL) is disordered. Low complexity predominate over residues 939 to 949 (SSSTTTTTTTT). At Ser1018 the chain carries Phosphoserine. Over residues 1032-1041 (NCPENKDSDK) the composition is skewed to basic and acidic residues. The tract at residues 1032–1087 (NCPENKDSDKLSPVFTQSRPLPSSNIHRPKPSRPTPGNTSKQGDPSKNSMTLDLNS) is disordered. At Ser1043 the chain carries Phosphoserine. Polar residues-rich tracts occupy residues 1045-1057 (VFTQ…SSNI) and 1066-1087 (TPGN…DLNS). The 266-residue stretch at 1243 to 1508 (WLKGQQIGLG…SRELLKHPVF (266 aa)) folds into the Protein kinase domain. ATP contacts are provided by residues 1249–1257 (IGLGAFSSC) and Lys1272. Asp1369 serves as the catalytic Proton acceptor. Residues Thr1400 and Thr1412 each carry the phosphothreonine; by autocatalysis modification.

This sequence belongs to the protein kinase superfamily. STE Ser/Thr protein kinase family. MAP kinase kinase kinase subfamily. Binds both upstream activators and downstream substrates in multimolecular complexes through its N-terminus. Oligomerizes after binding MAP2K4 or TRAF2. Interacts with AXIN1. Interacts (via the kinase catalytic domain) with STK38. Interacts with GRIPAP1. It depends on Mg(2+) as a cofactor. Autophosphorylated.

The catalysed reaction is L-seryl-[protein] + ATP = O-phospho-L-seryl-[protein] + ADP + H(+). It carries out the reaction L-threonyl-[protein] + ATP = O-phospho-L-threonyl-[protein] + ADP + H(+). The enzyme catalyses S-ubiquitinyl-[E2 ubiquitin-conjugating enzyme]-L-cysteine + [acceptor protein]-L-lysine = [E2 ubiquitin-conjugating enzyme]-L-cysteine + N(6)-ubiquitinyl-[acceptor protein]-L-lysine.. Activated by autophosphorylation on Thr-1400 and Thr-1412 following oligomerization. Its function is as follows. Component of a protein kinase signal transduction cascade. Activates the ERK and JNK kinase pathways by phosphorylation of MAP2K1 and MAP2K4. May phosphorylate the MAPK8/JNK1 kinase. Activates CHUK and IKBKB, the central protein kinases of the NF-kappa-B pathway. The protein is Mitogen-activated protein kinase kinase kinase 1 (MAP3K1) of Homo sapiens (Human).